The following is a 247-amino-acid chain: Carboxy-S-adenosyl-L-methionine synthase (247 aa).

S-adenosyl-L-methionine is bound by residues Y39, 64–66, 89–90, 117–118, N132, and R199; these read GCS, DN, and DI.

It belongs to the class I-like SAM-binding methyltransferase superfamily. Cx-SAM synthase family. In terms of assembly, homodimer.

It catalyses the reaction prephenate + S-adenosyl-L-methionine = carboxy-S-adenosyl-L-methionine + 3-phenylpyruvate + H2O. In terms of biological role, catalyzes the conversion of S-adenosyl-L-methionine (SAM) to carboxy-S-adenosyl-L-methionine (Cx-SAM). In Klebsiella pneumoniae subsp. pneumoniae (strain ATCC 700721 / MGH 78578), this protein is Carboxy-S-adenosyl-L-methionine synthase.